The sequence spans 331 residues: Ketol-acid reductoisomerase (NADP(+)) (331 aa).

One can recognise a KARI N-terminal Rossmann domain in the interval 2–182; the sequence is ARMYYDADAQ…GGTRAGILET (181 aa). Residues 25 to 28, serine 51, serine 53, and 83 to 86 contribute to the NADP(+) site; these read YGSQ and DEVQ. Residue histidine 108 is part of the active site. Glycine 134 is an NADP(+) binding site. Residues 183-328 enclose the KARI C-terminal knotted domain; it reads TFREETETDL…QELRSMFSWL (146 aa). Mg(2+) is bound by residues aspartate 191, glutamate 195, glutamate 227, and glutamate 231. Serine 252 lines the substrate pocket.

Belongs to the ketol-acid reductoisomerase family. Requires Mg(2+) as cofactor.

The enzyme catalyses (2R)-2,3-dihydroxy-3-methylbutanoate + NADP(+) = (2S)-2-acetolactate + NADPH + H(+). The catalysed reaction is (2R,3R)-2,3-dihydroxy-3-methylpentanoate + NADP(+) = (S)-2-ethyl-2-hydroxy-3-oxobutanoate + NADPH + H(+). The protein operates within amino-acid biosynthesis; L-isoleucine biosynthesis; L-isoleucine from 2-oxobutanoate: step 2/4. It functions in the pathway amino-acid biosynthesis; L-valine biosynthesis; L-valine from pyruvate: step 2/4. Functionally, involved in the biosynthesis of branched-chain amino acids (BCAA). Catalyzes an alkyl-migration followed by a ketol-acid reduction of (S)-2-acetolactate (S2AL) to yield (R)-2,3-dihydroxy-isovalerate. In the isomerase reaction, S2AL is rearranged via a Mg-dependent methyl migration to produce 3-hydroxy-3-methyl-2-ketobutyrate (HMKB). In the reductase reaction, this 2-ketoacid undergoes a metal-dependent reduction by NADPH to yield (R)-2,3-dihydroxy-isovalerate. This Thermosynechococcus vestitus (strain NIES-2133 / IAM M-273 / BP-1) protein is Ketol-acid reductoisomerase (NADP(+)).